Reading from the N-terminus, the 802-residue chain is Phenylalanine--tRNA ligase beta subunit (802 aa).

One can recognise a tRNA-binding domain in the interval 39–154; that stretch reads AEGLSKLVVG…EDAVPGDSIF (116 aa). The 76-residue stretch at 407-482 folds into the B5 domain; that stretch reads TEPVQVSTSL…RIYGYEKLPT (76 aa). 4 residues coordinate Mg(2+): Asp460, Asp466, Glu469, and Glu470. Residues 709-802 form the FDX-ACB domain; sequence TKFPAVSRDI…LTEKVEAEVR (94 aa).

The protein belongs to the phenylalanyl-tRNA synthetase beta subunit family. Type 1 subfamily. As to quaternary structure, tetramer of two alpha and two beta subunits. Mg(2+) serves as cofactor.

Its subcellular location is the cytoplasm. It carries out the reaction tRNA(Phe) + L-phenylalanine + ATP = L-phenylalanyl-tRNA(Phe) + AMP + diphosphate + H(+). The sequence is that of Phenylalanine--tRNA ligase beta subunit from Streptococcus thermophilus (strain CNRZ 1066).